The chain runs to 650 residues: DNA gyrase subunit B (650 aa).

Residues 400-414 are compositionally biased toward basic and acidic residues; sequence RRSQEARELTRRKSP. A disordered region spans residues 400-422; sequence RRSQEARELTRRKSPFDSGSLPG. The Toprim domain maps to 435-549; that stretch reads SELYIVEGDS…QGNIYIAQPP (115 aa). Glu441, Asp514, and Asp516 together coordinate Mg(2+).

This sequence belongs to the type II topoisomerase GyrB family. As to quaternary structure, heterotetramer, composed of two GyrA and two GyrB chains. In the heterotetramer, GyrA contains the active site tyrosine that forms a transient covalent intermediate with DNA, while GyrB binds cofactors and catalyzes ATP hydrolysis. It depends on Mg(2+) as a cofactor. Mn(2+) serves as cofactor. The cofactor is Ca(2+).

It localises to the cytoplasm. The enzyme catalyses ATP-dependent breakage, passage and rejoining of double-stranded DNA.. In terms of biological role, a type II topoisomerase that negatively supercoils closed circular double-stranded (ds) DNA in an ATP-dependent manner to modulate DNA topology and maintain chromosomes in an underwound state. Negative supercoiling favors strand separation, and DNA replication, transcription, recombination and repair, all of which involve strand separation. Also able to catalyze the interconversion of other topological isomers of dsDNA rings, including catenanes and knotted rings. Type II topoisomerases break and join 2 DNA strands simultaneously in an ATP-dependent manner. In Mycoplasma pneumoniae (strain ATCC 29342 / M129 / Subtype 1) (Mycoplasmoides pneumoniae), this protein is DNA gyrase subunit B.